Consider the following 259-residue polypeptide: MALKVFNWLNRKKHSNVEYCTINENKAMEEKEDSLRASVTEQDTEALLLRDVLINGILAIGTLGHNVNSLCPESCIEQDEPIIMCDEKVEQEKCEEEKAEAKQDTPVTAPSEPASALEPAKMHSSSMKEDNFMCFVKEEILMHGMEVEDVPNIQERPLLMLEKVEKVRTTLADLFAAEAFSSSDAEDKCYPKIVIVAGASTSKPTSCMEKMHHKKPTKPTSKPLKATRKLSRVMRKMLGKKIHPEQLNGRSNAEGPVTA.

An IGT motif motif is present at residues 56-62 (GILAIGT). Disordered stretches follow at residues 96–123 (EEKAEAKQDTPVTAPSEPASALEPAKMH), 206–226 (SCMEKMHHKKPTKPTSKPLKA), and 239–259 (GKKIHPEQLNGRSNAEGPVTA). Positions 109 to 119 (APSEPASALEP) are enriched in low complexity.

The protein belongs to the TAC family. In terms of tissue distribution, expressed in the basal part of seedlings.

In terms of biological role, involved in the regulation of tiller growth angle. Promotes horizontal shoot growth. TAC1 and LAZY1 play opposite functions in the regulation of tiller growth angle. The chain is Protein TILLER ANGLE CONTROL 1 from Oryza sativa subsp. indica (Rice).